The sequence spans 824 residues: Dapper 1 (824 aa).

Disordered regions lie at residues methionine 1–arginine 34, alanine 61–proline 80, glutamate 131–glycine 150, threonine 454–glutamine 487, and alanine 516–glutamine 536. Positions lysine 2–serine 343 are interaction with tcf7l1. Over residues leucine 11–arginine 34 the composition is skewed to basic and acidic residues. A coiled-coil region spans residues arginine 19 to leucine 47. The span at phenylalanine 520 to serine 530 shows a compositional bias: basic and acidic residues. The PDZ-binding motif lies at methionine 821–valine 824.

This sequence belongs to the dapper family. As to quaternary structure, interacts with dbf4, dvl2 and tcf7l1.

Its subcellular location is the cytoplasm. It is found in the nucleus. Functionally, involved in regulation of intracellular signaling pathways during development. Specifically thought to play a role in canonical and/or non-canonical Wnt signaling pathways through interaction with DSH (Dishevelled) family proteins. Binds to dvl2 and regulates the degradation of ctnnb1/beta-catenin, thereby modulating the transcriptional activation of target genes of the Wnt signaling pathway. May also bind to and directly stimulate the activity of tcf7l1. The chain is Dapper 1 (dact1) from Xenopus tropicalis (Western clawed frog).